A 375-amino-acid chain; its full sequence is Chaperone protein DnaJ (375 aa).

Residues 5-70 (DYYEVLGVER…GKRSAYDQYG (66 aa)) enclose the J domain. Residues 134-212 (GTTVTIRVPT…CHGQGRVEES (79 aa)) form a CR-type zinc finger. 8 residues coordinate Zn(2+): cysteine 147, cysteine 150, cysteine 164, cysteine 167, cysteine 186, cysteine 189, cysteine 200, and cysteine 203. CXXCXGXG motif repeat units follow at residues 147–154 (CKTCDGTG), 164–171 (CTTCGGIG), 186–193 (CPRCHGSG), and 200–207 (CGSCHGQG).

This sequence belongs to the DnaJ family. In terms of assembly, homodimer. Requires Zn(2+) as cofactor.

Its subcellular location is the cytoplasm. Participates actively in the response to hyperosmotic and heat shock by preventing the aggregation of stress-denatured proteins and by disaggregating proteins, also in an autonomous, DnaK-independent fashion. Unfolded proteins bind initially to DnaJ; upon interaction with the DnaJ-bound protein, DnaK hydrolyzes its bound ATP, resulting in the formation of a stable complex. GrpE releases ADP from DnaK; ATP binding to DnaK triggers the release of the substrate protein, thus completing the reaction cycle. Several rounds of ATP-dependent interactions between DnaJ, DnaK and GrpE are required for fully efficient folding. Also involved, together with DnaK and GrpE, in the DNA replication of plasmids through activation of initiation proteins. The protein is Chaperone protein DnaJ of Ectopseudomonas mendocina (strain ymp) (Pseudomonas mendocina).